Consider the following 381-residue polypeptide: Transaldolase 2 (381 aa).

K141 (schiff-base intermediate with substrate) is an active-site residue.

It belongs to the transaldolase family. Type 2 subfamily.

The protein resides in the cytoplasm. The enzyme catalyses D-sedoheptulose 7-phosphate + D-glyceraldehyde 3-phosphate = D-erythrose 4-phosphate + beta-D-fructose 6-phosphate. The protein operates within carbohydrate degradation; pentose phosphate pathway; D-glyceraldehyde 3-phosphate and beta-D-fructose 6-phosphate from D-ribose 5-phosphate and D-xylulose 5-phosphate (non-oxidative stage): step 2/3. Transaldolase is important for the balance of metabolites in the pentose-phosphate pathway. This chain is Transaldolase 2 (tal2), found in Nostoc punctiforme (strain ATCC 29133 / PCC 73102).